The primary structure comprises 255 residues: Glutamate racemase (255 aa).

Residues 7–8 (DS) and 39–40 (YG) each bind substrate. C70 acts as the Proton donor/acceptor in catalysis. Substrate is bound at residue 71–72 (NT). C181 functions as the Proton donor/acceptor in the catalytic mechanism. 182–183 (TH) is a binding site for substrate.

The protein belongs to the aspartate/glutamate racemases family.

It catalyses the reaction L-glutamate = D-glutamate. The protein operates within cell wall biogenesis; peptidoglycan biosynthesis. Its function is as follows. Provides the (R)-glutamate required for cell wall biosynthesis. The sequence is that of Glutamate racemase from Helicobacter pylori (strain Shi470).